A 215-amino-acid polypeptide reads, in one-letter code: Large ribosomal subunit protein uL4 (215 aa).

The segment at 46-72 (TAKSKNRAEVSGGGRKPWAQKGGGRAR) is disordered. Positions 56–71 (SGGGRKPWAQKGGGRA) are enriched in gly residues.

Belongs to the universal ribosomal protein uL4 family. In terms of assembly, part of the 50S ribosomal subunit.

Its function is as follows. One of the primary rRNA binding proteins, this protein initially binds near the 5'-end of the 23S rRNA. It is important during the early stages of 50S assembly. It makes multiple contacts with different domains of the 23S rRNA in the assembled 50S subunit and ribosome. Forms part of the polypeptide exit tunnel. The chain is Large ribosomal subunit protein uL4 from Helicobacter pylori (strain Shi470).